The primary structure comprises 180 residues: Oligoribonuclease (180 aa).

Positions 7 to 170 constitute an Exonuclease domain; sequence LIWIDLEMTG…DDIRESIAEL (164 aa). Residue Tyr-128 is part of the active site.

Belongs to the oligoribonuclease family.

The protein resides in the cytoplasm. Functionally, 3'-to-5' exoribonuclease specific for small oligoribonucleotides. The polypeptide is Oligoribonuclease (Ectopseudomonas mendocina (strain ymp) (Pseudomonas mendocina)).